The following is a 485-amino-acid chain: NADH-quinone oxidoreductase subunit N (485 aa).

The next 14 helical transmembrane spans lie at 8 to 28 (LIAL…MLSI), 35 to 55 (FLNA…LWFV), 71 to 91 (GFAM…CTFA), 105 to 125 (FYLL…ANHL), 127 to 147 (ALFL…GYAF), 159 to 179 (YTIL…LVYA), 203 to 223 (LLAG…LVPF), 235 to 255 (PAPV…GVVM), 271 to 291 (VVLG…ALSQ), 297 to 317 (LLGY…IALQ), 326 to 346 (VGVY…VVSL), 373 to 393 (AAVM…LGFI), 408 to 430 (WWLV…RVAV), and 455 to 475 (IVVL…QPLI).

This sequence belongs to the complex I subunit 2 family. In terms of assembly, NDH-1 is composed of 13 different subunits. Subunits NuoA, H, J, K, L, M, N constitute the membrane sector of the complex.

The protein localises to the cell inner membrane. It catalyses the reaction a quinone + NADH + 5 H(+)(in) = a quinol + NAD(+) + 4 H(+)(out). In terms of biological role, NDH-1 shuttles electrons from NADH, via FMN and iron-sulfur (Fe-S) centers, to quinones in the respiratory chain. The immediate electron acceptor for the enzyme in this species is believed to be ubiquinone. Couples the redox reaction to proton translocation (for every two electrons transferred, four hydrogen ions are translocated across the cytoplasmic membrane), and thus conserves the redox energy in a proton gradient. The sequence is that of NADH-quinone oxidoreductase subunit N from Salmonella arizonae (strain ATCC BAA-731 / CDC346-86 / RSK2980).